We begin with the raw amino-acid sequence, 182 residues long: Helofensin-3 (182 aa).

Residues 1 to 26 (MQMDWLFIAVISGIGLLSSGVPGTQG) form the signal peptide. A C(6)C(4)C(9)C(6)CC 1; approximate repeat occupies 27–64 (AYTTEQCRALNGSCNFYACFPKNVIIGKCDWWGWSCCA). The stretch at 65–101 (RTPLERCTAKKGTCTKTGCTKTDTDHGPCDGGAQCCQ) is one C(6)C(4)C(9)C(6)CC 2; approximate repeat. The stretch at 102–138 (RDPVKYCKFHGNVCGRGKCPMDHIPIGECTPGYPCCK) is one C(6)C(4)C(9)C(6)CC 3; approximate repeat. Residues 139 to 176 (RDGPAYCKSKGGKCLNRCPQIVPTNVIGVCATGVPCCK) form a C(6)C(4)C(9)C(6)CC 4; approximate repeat.

Belongs to the beta-defensin family. Helofensin subfamily. Expressed by the mandibular venom gland.

The protein resides in the secreted. Functionally, lethal toxin which possesses an inhibitory effect on direct electrical stimulation of the isolated hemi-diaphragm of mice. Neither hemorrhagic nor hemolytic activities are detected. Phospholipase A2 activity, proteolytic activity and arginine esterolytic activity are absent. The protein is Helofensin-3 of Heloderma suspectum cinctum (Banded Gila monster).